We begin with the raw amino-acid sequence, 126 residues long: Large ribosomal subunit protein bL12 (126 aa).

It belongs to the bacterial ribosomal protein bL12 family. As to quaternary structure, homodimer. Part of the ribosomal stalk of the 50S ribosomal subunit. Forms a multimeric L10(L12)X complex, where L10 forms an elongated spine to which 2 to 4 L12 dimers bind in a sequential fashion. Binds GTP-bound translation factors.

In terms of biological role, forms part of the ribosomal stalk which helps the ribosome interact with GTP-bound translation factors. Is thus essential for accurate translation. This chain is Large ribosomal subunit protein bL12, found in Nocardia farcinica (strain IFM 10152).